We begin with the raw amino-acid sequence, 507 residues long: 25-hydroxyvitamin D-1 alpha hydroxylase, mitochondrial (507 aa).

A heme-binding site is contributed by cysteine 454.

Belongs to the cytochrome P450 family. Requires heme as cofactor. Kidney.

The protein resides in the mitochondrion membrane. It carries out the reaction calcidiol + 2 reduced [adrenodoxin] + O2 + 2 H(+) = calcitriol + 2 oxidized [adrenodoxin] + H2O. The enzyme catalyses secalciferol + 2 reduced [adrenodoxin] + O2 + 2 H(+) = calcitetrol + 2 oxidized [adrenodoxin] + H2O. It catalyses the reaction 25-hydroxy-24-oxocalciol + 2 reduced [adrenodoxin] + O2 + 2 H(+) = (1S)-1,25-dihydroxy-24-oxocalciol + 2 oxidized [adrenodoxin] + H2O. The catalysed reaction is 25-hydroxyvitamin D2 + 2 reduced [adrenodoxin] + O2 + 2 H(+) = 1alpha,25-dihydroxyvitamin D2 + 2 oxidized [adrenodoxin] + H2O. It functions in the pathway hormone biosynthesis; vitamin D biosynthesis. Activated by cardiolipin and dioleoyl phosphatidylethanolamine (DOPE), phospholipids found in the inner mitochondrial membrane. Inhibited by high substrate concentration. Its function is as follows. A cytochrome P450 monooxygenase involved in vitamin D metabolism and in calcium and phosphorus homeostasis. Catalyzes the rate-limiting step in the activation of vitamin D in the kidney, namely the hydroxylation of 25-hydroxyvitamin D3/calcidiol at the C1-alpha position to form the hormonally active form of vitamin D3, 1alpha,25-dihydroxyvitamin D3/calcitriol that acts via the vitamin D receptor (VDR). Has 1-alpha-hydroxylase activity on vitamin D intermediates of the CYP24A1-mediated inactivation pathway. Converts 24R,25-dihydroxyvitamin D3/secalciferol to 1-alpha,24,25-trihydroxyvitamin D3, an active ligand of VDR. Also active on 25-hydroxyvitamin D2. Mechanistically, uses molecular oxygen inserting one oxygen atom into a substrate, and reducing the second into a water molecule, with two electrons provided by NADPH via FDXR/adrenodoxin reductase and FDX1/adrenodoxin. The sequence is that of 25-hydroxyvitamin D-1 alpha hydroxylase, mitochondrial (Cyp27b1) from Mus musculus (Mouse).